Reading from the N-terminus, the 223-residue chain is N-terminal Xaa-Pro-Lys N-methyltransferase 1 (223 aa).

S-adenosyl-L-methionine-binding positions include Gly69, Arg74, 91–93 (DVT), 119–120 (LQ), and Gln135.

The protein belongs to the methyltransferase superfamily. NTM1 family.

The protein resides in the nucleus. It catalyses the reaction N-terminal L-alanyl-L-prolyl-L-lysyl-[protein] + 3 S-adenosyl-L-methionine = N-terminal N,N,N-trimethyl-L-alanyl-L-prolyl-L-lysyl-[protein] + 3 S-adenosyl-L-homocysteine + 3 H(+). The catalysed reaction is N-terminal L-seryl-L-prolyl-L-lysyl-[protein] + 3 S-adenosyl-L-methionine = N-terminal N,N,N-trimethyl-L-seryl-L-prolyl-L-lysyl-[protein] + 3 S-adenosyl-L-homocysteine + 3 H(+). It carries out the reaction N-terminal L-prolyl-L-prolyl-L-lysyl-[protein] + 2 S-adenosyl-L-methionine = N-terminal N,N-dimethyl-L-prolyl-L-prolyl-L-lysyl-[protein] + 2 S-adenosyl-L-homocysteine + 2 H(+). Its function is as follows. Distributive alpha-N-methyltransferase that methylates the N-terminus of target proteins containing the N-terminal motif [Ala/Gly/Pro/Ser]-Pro-Lys when the initiator Met is cleaved. Specifically catalyzes mono-, di- or tri-methylation of the exposed alpha-amino group of the Ala, Gly or Ser residue in the [Ala/Gly/Ser]-Pro-Lys motif and mono- or di-methylation of Pro in the Pro-Pro-Lys motif. Required during mitosis for normal bipolar spindle formation and chromosome segregation via its action on target proteins. The chain is N-terminal Xaa-Pro-Lys N-methyltransferase 1 (ntmt1) from Danio rerio (Zebrafish).